The following is a 287-amino-acid chain: ATP synthase gamma chain (287 aa).

The protein belongs to the ATPase gamma chain family. As to quaternary structure, F-type ATPases have 2 components, CF(1) - the catalytic core - and CF(0) - the membrane proton channel. CF(1) has five subunits: alpha(3), beta(3), gamma(1), delta(1), epsilon(1). CF(0) has three main subunits: a, b and c. The F(1)F(0) complex interacts with SpoIIIJ and YqjG; YqgA is found in the same complex. Interacts with FloT.

It localises to the cell membrane. The protein resides in the membrane raft. Its function is as follows. Produces ATP from ADP in the presence of a proton gradient across the membrane. The gamma chain is believed to be important in regulating ATPase activity and the flow of protons through the CF(0) complex. The chain is ATP synthase gamma chain from Bacillus subtilis (strain 168).